The sequence spans 319 residues: tRNA (guanine-N(7)-)-methyltransferase (319 aa).

Residues 1–44 (MSESPETPEPSPAQSPEAAPEQPQAARPVTPGSQASFGTYGGRP) are disordered. Residues 14 to 26 (QSPEAAPEQPQAA) are compositionally biased toward low complexity. Positions 103, 128, 155, and 178 each coordinate S-adenosyl-L-methionine. Asp-178 is an active-site residue. Residues Lys-182 and Asp-214 each coordinate substrate. The disordered stretch occupies residues 262–288 (APVKEGRAPVSTEHTGPNEGVDETGGW). 298-301 (TSFE) is a binding site for substrate.

Belongs to the class I-like SAM-binding methyltransferase superfamily. TrmB family.

The catalysed reaction is guanosine(46) in tRNA + S-adenosyl-L-methionine = N(7)-methylguanosine(46) in tRNA + S-adenosyl-L-homocysteine. The protein operates within tRNA modification; N(7)-methylguanine-tRNA biosynthesis. Its function is as follows. Catalyzes the formation of N(7)-methylguanine at position 46 (m7G46) in tRNA. The protein is tRNA (guanine-N(7)-)-methyltransferase of Arthrobacter sp. (strain FB24).